Reading from the N-terminus, the 457-residue chain is Dihydrolipoyl dehydrogenase (457 aa).

FAD contacts are provided by residues 32-40 (EKQYFGGVC), Lys-49, and Ala-113. A disulfide bridge connects residues Cys-40 and Cys-45. NAD(+) contacts are provided by residues 178 to 182 (GGGVI), Val-235, and 262 to 265 (SIGR). Positions 303 and 311 each coordinate FAD. His-437 (proton acceptor) is an active-site residue.

Belongs to the class-I pyridine nucleotide-disulfide oxidoreductase family. As to quaternary structure, homodimer. FAD is required as a cofactor.

Its subcellular location is the cytoplasm. The catalysed reaction is N(6)-[(R)-dihydrolipoyl]-L-lysyl-[protein] + NAD(+) = N(6)-[(R)-lipoyl]-L-lysyl-[protein] + NADH + H(+). Lipoamide dehydrogenase is a component of the alpha-ketoacid dehydrogenase complexes. The protein is Dihydrolipoyl dehydrogenase (pdhD) of Mycoplasma genitalium (strain ATCC 33530 / DSM 19775 / NCTC 10195 / G37) (Mycoplasmoides genitalium).